Here is a 116-residue protein sequence, read N- to C-terminus: Non-specific lipid-transfer protein 8 (116 aa).

A signal peptide spans 1–24; that stretch reads MNVLKCLAIISVLGIFFIPRYSES. 4 disulfides stabilise this stretch: cysteine 28–cysteine 76, cysteine 38–cysteine 53, cysteine 54–cysteine 98, and cysteine 74–cysteine 112.

It belongs to the plant LTP family.

Plant non-specific lipid-transfer proteins transfer phospholipids as well as galactolipids across membranes. May play a role in wax or cutin deposition in the cell walls of expanding epidermal cells and certain secretory tissues. This Arabidopsis thaliana (Mouse-ear cress) protein is Non-specific lipid-transfer protein 8 (LTP8).